Consider the following 542-residue polypeptide: MLDILRFVLICGILWILRRVLLRVFIHSPLDKIPGPPPVSFAKGNLPQLYDRNGWDFIKGLGEKYGGVVKINGLYGAKMLFVFDPAALSSVVVKDQYVYERSEDATKSTRLMLGDGLLTSQGETHRKQRKLMNPVFSINHMRDMMPIFYQISRNLRDAIASRIDNGEKEIDVLDWMARTALELVGQAGLGYSFDPLVQDKADAYAEAIKALVPTAFGLRLYRPLLPIALKIGTPAIRRRILKLIPSTRLQRMREISDAIDAHSKRIFEEKKQALARGDEAVLKQVGAGKDILSRLMQANMTASEEDRLPENELLGQMSTFIFAGMDTTSGALAHTLQLLAEHPDVQDKMRAEIVAALGGGQEIPYDTLVDLPYLDAVCRETLRLYAPVTTVNRTAQEDIVLPLSEPIRGTDGNLIQEIPVPKGTEVIVGILASNRNPALWGPDAAEWKPERWLEPLPDTINTARVPGVYSHLMTFLGGGRACIGFKFSQLEMKVVLAVLLSSFKFSLSSKEIVWNVAGIQYPTVGASGKPEMPMKIDRVKNT.

The signal sequence occupies residues 1 to 22 (MLDILRFVLICGILWILRRVLL). Residues N299 and N392 are each glycosylated (N-linked (GlcNAc...) asparagine). Residue C482 participates in heme binding.

This sequence belongs to the cytochrome P450 family. The cofactor is heme.

Its pathway is secondary metabolite biosynthesis. Cytochrome P450 monooxygenase that is able to use dehydroabietic acid as a substrate for oxidation. This is Cytochrome P450 monooxygenase 91 from Postia placenta (strain ATCC 44394 / Madison 698-R) (Brown rot fungus).